Consider the following 279-residue polypeptide: Movement protein (279 aa).

Positions 247–279 are disordered; that stretch reads ESEELNVESPPAAIGSSSASRSEAFRPQVVNGL. A compositionally biased stretch (low complexity) spans 254–268; sequence ESPPAAIGSSSASRS.

The protein belongs to the cucumovirus movement protein family.

It localises to the host cell junction. It is found in the host plasmodesma. Functionally, transports viral genome to neighboring plant cells directly through plasmosdesmata, without any budding. The movement protein allows efficient cell to cell propagation, by bypassing the host cell wall barrier. Acts by forming a tubular structure at the host plasmodesmata, enlarging it enough to allow free passage of virion capsids. In Cucumis sativus (Cucumber), this protein is Movement protein.